A 456-amino-acid polypeptide reads, in one-letter code: GTPase Der (456 aa).

2 consecutive EngA-type G domains span residues 4 to 169 and 177 to 352; these read PIVA…PAVE and IKVA…ESHK. Residues 10-17, 57-61, 120-123, 183-190, 230-234, and 295-298 contribute to the GTP site; these read GRPNVGKS, DTGGL, NKCE, DTAGI, and NKWD. Residues 353–438 enclose the KH-like domain; that stretch reads RRVSTSVINE…PIILLWRSKK (86 aa).

The protein belongs to the TRAFAC class TrmE-Era-EngA-EngB-Septin-like GTPase superfamily. EngA (Der) GTPase family. In terms of assembly, associates with the 50S ribosomal subunit.

GTPase that plays an essential role in the late steps of ribosome biogenesis. The protein is GTPase Der of Nostoc punctiforme (strain ATCC 29133 / PCC 73102).